The chain runs to 1111 residues: Cellulose synthase-like protein D4 (1111 aa).

2 disordered regions span residues 1–26 (MAST…KFAR) and 175–202 (DYSS…MMKR). The span at 192 to 202 (GNNNNMSMMKR) shows a compositional bias: polar residues. Transmembrane regions (helical) follow at residues 266-286 (AIIS…CFFL) and 297-317 (AIWL…SWIL). Catalysis depends on residues D397 and D809. A run of 6 helical transmembrane segments spans residues 891-911 (LFLI…QFIV), 914-934 (LSIS…GLAV), 963-983 (LYAV…SFTL), 1007-1027 (LMIP…VAFI), 1040-1060 (LIGG…FAKG), and 1070-1090 (TIVF…WTAI).

It belongs to the glycosyltransferase 2 family. Plant cellulose synthase-like D subfamily.

The protein localises to the golgi apparatus membrane. Its function is as follows. Thought to be a Golgi-localized beta-glycan synthase that polymerize the backbones of noncellulosic polysaccharides (hemicelluloses) of plant cell wall. The chain is Cellulose synthase-like protein D4 (CSLD4) from Arabidopsis thaliana (Mouse-ear cress).